Reading from the N-terminus, the 329-residue chain is DNA-directed RNA polymerase subunit alpha (329 aa).

An alpha N-terminal domain (alpha-NTD) region spans residues 1 to 234 (MQSAVNEFLT…QQLAVFVDLE (234 aa)). Positions 248 to 329 (IDPVLLRPVD…WPPASLKNND (82 aa)) are alpha C-terminal domain (alpha-CTD).

This sequence belongs to the RNA polymerase alpha chain family. Homodimer. The RNAP catalytic core consists of 2 alpha, 1 beta, 1 beta' and 1 omega subunit. When a sigma factor is associated with the core the holoenzyme is formed, which can initiate transcription.

It catalyses the reaction RNA(n) + a ribonucleoside 5'-triphosphate = RNA(n+1) + diphosphate. Its function is as follows. DNA-dependent RNA polymerase catalyzes the transcription of DNA into RNA using the four ribonucleoside triphosphates as substrates. This chain is DNA-directed RNA polymerase subunit alpha, found in Saccharophagus degradans (strain 2-40 / ATCC 43961 / DSM 17024).